Consider the following 341-residue polypeptide: MDTVRIAVVGAGVIGLSTAACVSQLVPRCSVTVISDRFTPDTTSNVAAGMLIPPTYPDTPVPTLKRWFRETFQHLSEIARSAEAVDAGIHLVSGWQIFRSVPTEEVPFWADVVLGFREMTEAELKRFPQYEFGQAFTTLKCETSAYLPWLEKRIKGSGGLLLTRRIEDLWELQPSFDIVVNCSGLGSRRLVGDATVSPVRGQVLQAQAPWVKHFIRDGGGLTYVYPGTSYVTLGGSRQTGDWNLSPDAELSREIFSRCCALEPSLHRACDIKEKVGLRPSRPGVRLQKEILVRGEQRLPVVHNYGHGSGGISVHWGSALEATRLVMECVHTLRTPASLSKL.

Residues D36, R37, T43, S44, M50, G307, I311, and S312 each coordinate FAD. Positions 339–341 match the Microbody targeting signal motif; sequence SKL.

The protein belongs to the DAMOX/DASOX family. As to quaternary structure, tetramer. Interacts with PEX5; the interaction is direct and required for localization of DDO to the peroxisome. FAD is required as a cofactor. As to expression, expressed in liver and kidney (at protein level). In the brain, expressed in the frontal, temporal, and occipital lobes of the cortex, hippocampus, striatum, diencephalon, brainstem, cerebellum, spinal cord, plexus choroiderus and ependyma (at protein level). Also expressed in the lung, muscle, heart, spleen, small intestine and testis (at protein level).

It is found in the peroxisome matrix. It localises to the cytoplasm. The protein localises to the cytosol. The catalysed reaction is D-aspartate + O2 + H2O = oxaloacetate + H2O2 + NH4(+). The enzyme catalyses D-glutamate + O2 + H2O = H2O2 + 2-oxoglutarate + NH4(+). Its activity is regulated as follows. Inhibited by aminooxyacetic acid, malonate, meso-tartrate and potassium bromide. Its function is as follows. Selectively catalyzes the oxidative deamination of acidic amino acids. Suppresses the level of D-aspartate in the brain, an amino acid that can act as an agonist for glutamate receptors. Protects the organism from the toxicity of D-amino acids. May also function in the intestine. The protein is D-aspartate oxidase of Rattus norvegicus (Rat).